The following is a 759-amino-acid chain: LPS-assembly protein LptD (759 aa).

Residues 1 to 45 (MKPLKLELNPRDFNHYQAAFLPYRMKIKQPLHVLCFSVCSLSAVA) form the signal peptide.

It belongs to the LptD family. Component of the lipopolysaccharide transport and assembly complex. Interacts with LptE and LptA.

The protein resides in the cell outer membrane. Together with LptE, is involved in the assembly of lipopolysaccharide (LPS) at the surface of the outer membrane. In Pseudoalteromonas atlantica (strain T6c / ATCC BAA-1087), this protein is LPS-assembly protein LptD.